A 544-amino-acid chain; its full sequence is Sialidase (544 aa).

Residues 1-22 (MKKAVILFSLFCFLCAIPVVQA) form the signal peptide. BNR repeat units lie at residues 239–250 (SRSTDGGKTWEK), 318–329 (AKSTDDGKTWSA), and 378–389 (MYSKDGGKNWKM). Glu399 is a catalytic residue. Arg415 is a substrate binding site. The stretch at 425–436 (AITKDLGKTWTE) is one BNR 4 repeat. Arg479 serves as a coordination point for substrate. One copy of the BNR 5 repeat lies at 485–496 (KISLDGGVTWSP).

The protein belongs to the glycosyl hydrolase 33 family.

The protein resides in the periplasm. It catalyses the reaction Hydrolysis of alpha-(2-&gt;3)-, alpha-(2-&gt;6)-, alpha-(2-&gt;8)- glycosidic linkages of terminal sialic acid residues in oligosaccharides, glycoproteins, glycolipids, colominic acid and synthetic substrates.. Its function is as follows. Sialidases have been suggested to be pathogenic factors in microbial infections. The chain is Sialidase (nanH) from Bacteroides fragilis (strain YCH46).